A 348-amino-acid chain; its full sequence is Protein pof5 (348 aa).

The protein to yeast YDR306C. As to quaternary structure, interacts with skp1.

It localises to the mitochondrion. This chain is Protein pof5 (pof5), found in Schizosaccharomyces pombe (strain 972 / ATCC 24843) (Fission yeast).